The following is a 239-amino-acid chain: Succinate dehydrogenase [ubiquinone] iron-sulfur subunit (239 aa).

The 76-residue stretch at 24–99 folds into the 2Fe-2S ferredoxin-type domain; the sequence is AEAKFSVHPI…NANIITIYPL (76 aa). The [2Fe-2S] cluster site is built by Cys63, Cys68, Cys71, and Cys83. Residues 142-172 enclose the 4Fe-4S ferredoxin-type domain; that stretch reads DRSELNGIYECILCACCSASCPSYWWNHDKY. Residues Cys152, Cys155, and Cys158 each coordinate [4Fe-4S] cluster. Cys162 is a binding site for [3Fe-4S] cluster. An a ubiquinone-binding site is contributed by Trp167. [3Fe-4S] cluster contacts are provided by Cys209 and Cys215. Residue Cys219 participates in [4Fe-4S] cluster binding.

Belongs to the succinate dehydrogenase/fumarate reductase iron-sulfur protein family. In terms of assembly, component of complex II composed of four subunits: a flavoprotein (FP), an iron-sulfur protein (IP), and a cytochrome b composed of a large and a small subunit. It depends on [2Fe-2S] cluster as a cofactor. [3Fe-4S] cluster is required as a cofactor. The cofactor is [4Fe-4S] cluster.

The protein resides in the mitochondrion inner membrane. The catalysed reaction is a quinone + succinate = fumarate + a quinol. Its pathway is carbohydrate metabolism; tricarboxylic acid cycle; fumarate from succinate (eukaryal route): step 1/1. In terms of biological role, iron-sulfur protein (IP) subunit of succinate dehydrogenase (SDH) that is involved in complex II of the mitochondrial electron transport chain and is responsible for transferring electrons from succinate to ubiquinone (coenzyme Q). The polypeptide is Succinate dehydrogenase [ubiquinone] iron-sulfur subunit (SDH2) (Porphyra purpurea (Red seaweed)).